Here is a 445-residue protein sequence, read N- to C-terminus: MAAEEGGDGRRNMGNPPPPAPAESEEEDDNEMEVEDQDGKEAEKPNMINFDTSLPTSHMYLGSDMEEFHGRTLHDDDSCQVIPVLPHVMVMLIPGQTLPLQLFHPQEVSMVRNLIQKDRTFAVLAYSNVREREAHFGTTAEIYAYREEQEYGIETVKVKAIGRQRFKVLEIRTQSDGIQQAKVQILPERVLPSTMSAVQLQSLSRRHIFPSSKPKVWQDRAFRQWWQKYQKRKFHCASLTSWPPWLYSLYDAETLMERVKRQLHEWDENLKDESLPTNPIDFSYRVAACLPIDDALRIQLLKIGSAIQRLRCELDIMNKCTSLCCKQCQDTEITTKNEIFSLSLCGPMAAYVNPHGYIHETLTVYKACNLNLSGRPSTEHSWFPGYAWTIAQCRICGNHMGWKFTATKKDMSPQKFWGLTRSALLPRIPEAEDELGHDRSPLLCL.

Positions 1–50 (MAAEEGGDGRRNMGNPPPPAPAESEEEDDNEMEVEDQDGKEAEKPNMINF) are disordered. Residues 23–36 (ESEEEDDNEMEVED) show a composition bias toward acidic residues. The 240-residue stretch at 82–321 (IPVLPHVMVM…CELDIMNKCT (240 aa)) folds into the Lon N-terminal domain. The CULT domain maps to 320 to 428 (CTSLCCKQCQ…LTRSALLPRI (109 aa)). Residues C325 and C328 each coordinate Zn(2+). 3 residues coordinate (S)-thalidomide: H380, W382, and W388. Zn(2+)-binding residues include C393 and C396.

Belongs to the CRBN family. In terms of assembly, component of a DCX (DDB1-CUL4-X-box) protein ligase complex. Interacts directly with DDB1.

It is found in the cytoplasm. It localises to the nucleus. The protein operates within protein modification; protein ubiquitination. In terms of biological role, substrate recognition component of a DCX (DDB1-CUL4-X-box) E3 protein ligase complex that mediates the ubiquitination and subsequent proteasomal degradation of target proteins, such as MEIS2. Normal degradation of key regulatory proteins is required for normal limb outgrowth and expression of the fibroblast growth factor FGF8. Maintains presynaptic glutamate release and consequently cognitive functions, such as memory and learning, by negatively regulating large-conductance calcium-activated potassium (BK) channels in excitatory neurons. Likely to function by regulating the assembly and neuronal surface expression of BK channels via its interaction with KCNT1. May also be involved in regulating anxiety-like behaviors via a BK channel-independent mechanism. The polypeptide is Protein cereblon (CRBN) (Gallus gallus (Chicken)).